We begin with the raw amino-acid sequence, 123 residues long: Large ribosomal subunit protein uL18 (123 aa).

The protein belongs to the universal ribosomal protein uL18 family. In terms of assembly, part of the 50S ribosomal subunit; part of the 5S rRNA/L5/L18/L25 subcomplex. Contacts the 5S and 23S rRNAs.

Its function is as follows. This is one of the proteins that bind and probably mediate the attachment of the 5S RNA into the large ribosomal subunit, where it forms part of the central protuberance. In Symbiobacterium thermophilum (strain DSM 24528 / JCM 14929 / IAM 14863 / T), this protein is Large ribosomal subunit protein uL18.